Here is an 85-residue protein sequence, read N- to C-terminus: ATP synthase subunit c (85 aa).

Transmembrane regions (helical) follow at residues isoleucine 10–leucine 30 and phenylalanine 53–phenylalanine 73.

Belongs to the ATPase C chain family. As to quaternary structure, F-type ATPases have 2 components, F(1) - the catalytic core - and F(0) - the membrane proton channel. F(1) has five subunits: alpha(3), beta(3), gamma(1), delta(1), epsilon(1). F(0) has three main subunits: a(1), b(2) and c(10-14). The alpha and beta chains form an alternating ring which encloses part of the gamma chain. F(1) is attached to F(0) by a central stalk formed by the gamma and epsilon chains, while a peripheral stalk is formed by the delta and b chains.

The protein localises to the cell inner membrane. Its function is as follows. F(1)F(0) ATP synthase produces ATP from ADP in the presence of a proton or sodium gradient. F-type ATPases consist of two structural domains, F(1) containing the extramembraneous catalytic core and F(0) containing the membrane proton channel, linked together by a central stalk and a peripheral stalk. During catalysis, ATP synthesis in the catalytic domain of F(1) is coupled via a rotary mechanism of the central stalk subunits to proton translocation. Functionally, key component of the F(0) channel; it plays a direct role in translocation across the membrane. A homomeric c-ring of between 10-14 subunits forms the central stalk rotor element with the F(1) delta and epsilon subunits. The protein is ATP synthase subunit c of Aliivibrio fischeri (strain ATCC 700601 / ES114) (Vibrio fischeri).